Here is a 265-residue protein sequence, read N- to C-terminus: MKPTILLYDSGMGGLTVYDEIRKKLPNAHYLYYFDNACFPYSEKPTEVLVERATKMVQKMAKNYPLDLVVVACNTASTVVLPTLRKIFPFPIVGTVPAIKPAAALSQTKTIGLLATKGTITRPYVLSLIEQYAPNCQIEKIGSTALVELVEQKLQTGVIDLTRLTPIIADWQNHPTLDTVILGCTHFPMAKTELQQLLPNVKYFLDSGNAIANRVTHLIMHSPHNQQLEKQRENLAFCTQQNNQFKQQAKIMQRWGFPQLNTLMI.

Substrate is bound by residues 9 to 10 (DS) and 41 to 42 (YS). Catalysis depends on Cys-73, which acts as the Proton donor/acceptor. 74-75 (NT) is a substrate binding site. Cys-184 acts as the Proton donor/acceptor in catalysis. Position 185–186 (185–186 (TH)) interacts with substrate.

This sequence belongs to the aspartate/glutamate racemases family.

The catalysed reaction is L-glutamate = D-glutamate. It participates in cell wall biogenesis; peptidoglycan biosynthesis. In terms of biological role, provides the (R)-glutamate required for cell wall biosynthesis. The protein is Glutamate racemase of Haemophilus ducreyi (strain 35000HP / ATCC 700724).